The primary structure comprises 494 residues: Aspartyl/glutamyl-tRNA(Asn/Gln) amidotransferase subunit B (494 aa).

The protein belongs to the GatB/GatE family. GatB subfamily. As to quaternary structure, heterotrimer of A, B and C subunits.

It catalyses the reaction L-glutamyl-tRNA(Gln) + L-glutamine + ATP + H2O = L-glutaminyl-tRNA(Gln) + L-glutamate + ADP + phosphate + H(+). The enzyme catalyses L-aspartyl-tRNA(Asn) + L-glutamine + ATP + H2O = L-asparaginyl-tRNA(Asn) + L-glutamate + ADP + phosphate + 2 H(+). In terms of biological role, allows the formation of correctly charged Asn-tRNA(Asn) or Gln-tRNA(Gln) through the transamidation of misacylated Asp-tRNA(Asn) or Glu-tRNA(Gln) in organisms which lack either or both of asparaginyl-tRNA or glutaminyl-tRNA synthetases. The reaction takes place in the presence of glutamine and ATP through an activated phospho-Asp-tRNA(Asn) or phospho-Glu-tRNA(Gln). This is Aspartyl/glutamyl-tRNA(Asn/Gln) amidotransferase subunit B from Trichodesmium erythraeum (strain IMS101).